The chain runs to 121 residues: UPF0344 protein BCA_1194 (121 aa).

A run of 4 helical transmembrane segments spans residues 6–26, 38–58, 65–85, and 92–112; these read ITAWALGLILFFVAYSLYSAG, LMYIIIIVTGFMLYMGIMKTA, WYGLKMVAGILVIGGMEMVLV, and ATGAVWGLFIVALVAVFYLGL.

The protein belongs to the UPF0344 family.

Its subcellular location is the cell membrane. This is UPF0344 protein BCA_1194 from Bacillus cereus (strain 03BB102).